The sequence spans 222 residues: 2-C-methyl-D-erythritol 4-phosphate cytidylyltransferase (222 aa).

This sequence belongs to the IspD/TarI cytidylyltransferase family. IspD subfamily.

The catalysed reaction is 2-C-methyl-D-erythritol 4-phosphate + CTP + H(+) = 4-CDP-2-C-methyl-D-erythritol + diphosphate. The protein operates within isoprenoid biosynthesis; isopentenyl diphosphate biosynthesis via DXP pathway; isopentenyl diphosphate from 1-deoxy-D-xylulose 5-phosphate: step 2/6. In terms of biological role, catalyzes the formation of 4-diphosphocytidyl-2-C-methyl-D-erythritol from CTP and 2-C-methyl-D-erythritol 4-phosphate (MEP). The sequence is that of 2-C-methyl-D-erythritol 4-phosphate cytidylyltransferase from Thermotoga maritima (strain ATCC 43589 / DSM 3109 / JCM 10099 / NBRC 100826 / MSB8).